The sequence spans 823 residues: Zygotic DNA replication licensing factor mcm6-A (823 aa).

The C4-type zinc-finger motif lies at Cys-159–Cys-186. Residues Leu-347–Val-554 enclose the MCM domain. Gly-397 to Ser-404 contributes to the ATP binding site. An Arginine finger motif is present at residues Ser-529–Asp-532. A disordered region spans residues Pro-663–Ala-710. Over residues Leu-667–Gln-680 the composition is skewed to acidic residues. The segment covering Asn-691–His-703 has biased composition (low complexity).

This sequence belongs to the MCM family. Component of the mcm2-7 complex (RLF-M). The complex forms a toroidal hexameric ring with the proposed subunit order mcm2-mcm6-mcm4-mcm7-mcm3-mcm5 (By simililarity). Begins to associate with zmcm3, mcm4 and mcm7 into mcm complexes at the neurula stage. May replace mmcm6 in the complex that functions during licensing of DNA replication.

It is found in the nucleus. The enzyme catalyses ATP + H2O = ADP + phosphate + H(+). Functionally, acts as a component of the mcm2-7 complex (mcm complex) which is the putative replicative helicase essential for 'once per cell cycle' DNA replication initiation and elongation in eukaryotic cells. The active ATPase sites in the mcm2-7 ring are formed through the interaction surfaces of two neighboring subunits such that a critical structure of a conserved arginine finger motif is provided in trans relative to the ATP-binding site of the Walker A box of the adjacent subunit. The six ATPase active sites, however, are likely to contribute differentially to the complex helicase activity. The existence of maternal and zygotic forms of mcm3 and mcm6 suggests that specific forms of mcm2-7 complexes may be used during different stages of development. May replace mmcm6 in the mcm2-7 complex. The chain is Zygotic DNA replication licensing factor mcm6-A (zmcm6-a) from Xenopus laevis (African clawed frog).